We begin with the raw amino-acid sequence, 85 residues long: UPF0335 protein BARBAKC583_0130 (85 aa).

It belongs to the UPF0335 family.

This Bartonella bacilliformis (strain ATCC 35685 / KC583 / Herrer 020/F12,63) protein is UPF0335 protein BARBAKC583_0130.